Consider the following 353-residue polypeptide: GTPase Obg (353 aa).

Residues 1-159 (MKFLDEAKVY…RWIWLRLKLI (159 aa)) enclose the Obg domain. Residues 160–327 (ADAGLVGLPN…ALRALAAVIG (168 aa)) enclose the OBG-type G domain. Residues 166 to 173 (GLPNAGKS), 191 to 195 (FTTLH), 212 to 215 (DIPG), 279 to 282 (NKID), and 308 to 310 (SGV) contribute to the GTP site. Residues Ser-173 and Thr-193 each contribute to the Mg(2+) site.

Belongs to the TRAFAC class OBG-HflX-like GTPase superfamily. OBG GTPase family. In terms of assembly, monomer. Mg(2+) serves as cofactor.

It is found in the cytoplasm. Functionally, an essential GTPase which binds GTP, GDP and possibly (p)ppGpp with moderate affinity, with high nucleotide exchange rates and a fairly low GTP hydrolysis rate. Plays a role in control of the cell cycle, stress response, ribosome biogenesis and in those bacteria that undergo differentiation, in morphogenesis control. This chain is GTPase Obg, found in Rhodopseudomonas palustris (strain BisB5).